The sequence spans 1174 residues: DNA-directed RNA polymerase subunit beta' (1174 aa).

The Zn(2+) site is built by Cys60, Cys62, Cys75, and Cys78. Residues Asp450, Asp452, and Asp454 each coordinate Mg(2+). Zn(2+) contacts are provided by Cys795, Cys869, Cys876, and Cys879.

Belongs to the RNA polymerase beta' chain family. As to quaternary structure, the RNAP catalytic core consists of 2 alpha, 1 beta, 1 beta' and 1 omega subunit. When a sigma factor is associated with the core the holoenzyme is formed, which can initiate transcription. Mg(2+) is required as a cofactor. It depends on Zn(2+) as a cofactor.

It catalyses the reaction RNA(n) + a ribonucleoside 5'-triphosphate = RNA(n+1) + diphosphate. In terms of biological role, DNA-dependent RNA polymerase catalyzes the transcription of DNA into RNA using the four ribonucleoside triphosphates as substrates. This chain is DNA-directed RNA polymerase subunit beta', found in Clostridium kluyveri (strain ATCC 8527 / DSM 555 / NBRC 12016 / NCIMB 10680 / K1).